Here is a 220-residue protein sequence, read N- to C-terminus: Deoxyribose-phosphate aldolase (220 aa).

D89 serves as the catalytic Proton donor/acceptor. K151 (schiff-base intermediate with acetaldehyde) is an active-site residue. K180 serves as the catalytic Proton donor/acceptor.

The protein belongs to the DeoC/FbaB aldolase family. DeoC type 1 subfamily.

The protein resides in the cytoplasm. The catalysed reaction is 2-deoxy-D-ribose 5-phosphate = D-glyceraldehyde 3-phosphate + acetaldehyde. It functions in the pathway carbohydrate degradation; 2-deoxy-D-ribose 1-phosphate degradation; D-glyceraldehyde 3-phosphate and acetaldehyde from 2-deoxy-alpha-D-ribose 1-phosphate: step 2/2. Catalyzes a reversible aldol reaction between acetaldehyde and D-glyceraldehyde 3-phosphate to generate 2-deoxy-D-ribose 5-phosphate. The protein is Deoxyribose-phosphate aldolase of Staphylococcus epidermidis (strain ATCC 12228 / FDA PCI 1200).